A 609-amino-acid chain; its full sequence is Glutamine--fructose-6-phosphate aminotransferase [isomerizing] (609 aa).

Cys2 functions as the Nucleophile; for GATase activity in the catalytic mechanism. Residues Cys2 to Lys219 form the Glutamine amidotransferase type-2 domain. SIS domains lie at Glu288–Glu428 and Met460–Pro599. Lys604 functions as the For Fru-6P isomerization activity in the catalytic mechanism.

As to quaternary structure, homodimer.

The protein resides in the cytoplasm. The catalysed reaction is D-fructose 6-phosphate + L-glutamine = D-glucosamine 6-phosphate + L-glutamate. In terms of biological role, catalyzes the first step in hexosamine metabolism, converting fructose-6P into glucosamine-6P using glutamine as a nitrogen source. The sequence is that of Glutamine--fructose-6-phosphate aminotransferase [isomerizing] from Buchnera aphidicola subsp. Acyrthosiphon pisum (strain APS) (Acyrthosiphon pisum symbiotic bacterium).